Reading from the N-terminus, the 214-residue chain is MTDSITIALSKGRILEETLPLLAEAGIELVDDVKKSRKLVFPTTDPNVRILIIRATDVPTYVQYGGADLGVTGKDVLMEHGGDGLYEPLDLNISRCRLMTAGKKGEQPPAGRIRVATKFVNLARRYYAAQGRQADIIKLYGAMELAPILNLADEIVDIVDTGNTLKANGLEPRELIDHISSRLVVNRASMKMKHGQINPIIEKMSAAVERRRDS.

It belongs to the ATP phosphoribosyltransferase family. Short subfamily. In terms of assembly, heteromultimer composed of HisG and HisZ subunits.

It localises to the cytoplasm. It carries out the reaction 1-(5-phospho-beta-D-ribosyl)-ATP + diphosphate = 5-phospho-alpha-D-ribose 1-diphosphate + ATP. The protein operates within amino-acid biosynthesis; L-histidine biosynthesis; L-histidine from 5-phospho-alpha-D-ribose 1-diphosphate: step 1/9. Its function is as follows. Catalyzes the condensation of ATP and 5-phosphoribose 1-diphosphate to form N'-(5'-phosphoribosyl)-ATP (PR-ATP). Has a crucial role in the pathway because the rate of histidine biosynthesis seems to be controlled primarily by regulation of HisG enzymatic activity. The protein is ATP phosphoribosyltransferase of Marinobacter nauticus (strain ATCC 700491 / DSM 11845 / VT8) (Marinobacter aquaeolei).